A 158-amino-acid chain; its full sequence is SsrA-binding protein (158 aa).

The segment at 131–158 is disordered; it reads YDKRQTLRERQDKREADRAMSSHRRLGE.

Belongs to the SmpB family.

Its subcellular location is the cytoplasm. In terms of biological role, required for rescue of stalled ribosomes mediated by trans-translation. Binds to transfer-messenger RNA (tmRNA), required for stable association of tmRNA with ribosomes. tmRNA and SmpB together mimic tRNA shape, replacing the anticodon stem-loop with SmpB. tmRNA is encoded by the ssrA gene; the 2 termini fold to resemble tRNA(Ala) and it encodes a 'tag peptide', a short internal open reading frame. During trans-translation Ala-aminoacylated tmRNA acts like a tRNA, entering the A-site of stalled ribosomes, displacing the stalled mRNA. The ribosome then switches to translate the ORF on the tmRNA; the nascent peptide is terminated with the 'tag peptide' encoded by the tmRNA and targeted for degradation. The ribosome is freed to recommence translation, which seems to be the essential function of trans-translation. The protein is SsrA-binding protein of Clavibacter michiganensis subsp. michiganensis (strain NCPPB 382).